The chain runs to 415 residues: Alpha-N-acetylgalactosaminidase (415 aa).

Residues 1–17 form the signal peptide; that stretch reads MLQKTVLLLALVAQVLM. Intrachain disulfides connect Cys38/Cys80, Cys42/Cys49, and Cys127/Cys158. Residues 78 to 79 and Lys154 each bind substrate; that span reads DD. The Nucleophile role is filled by Asp156. An N-linked (GlcNAc...) asparagine glycan is attached at Asn177. Residues Cys187 and Cys209 are joined by a disulfide bond. Residue Ser188 coordinates substrate. Residue Asn201 is glycosylated (N-linked (GlcNAc...) asparagine). Substrate contacts are provided by Arg213 and Asp217. The active-site Proton donor is Asp217. A Phosphoserine modification is found at Ser322. Asn330 is a glycosylation site (N-linked (GlcNAc...) asparagine). Ser332 carries the post-translational modification Phosphoserine. The N-linked (GlcNAc...) asparagine glycan is linked to Asn385.

This sequence belongs to the glycosyl hydrolase 27 family. In terms of assembly, homodimer.

The protein localises to the lysosome. The enzyme catalyses Cleavage of non-reducing alpha-(1-&gt;3)-N-acetylgalactosamine residues from human blood group A and AB mucin glycoproteins, Forssman hapten and blood group A lacto series glycolipids.. The catalysed reaction is a neolactoside IV(3)-alpha-GalNAc,IV(2)-alpha-Fuc-nLc4Cer(d18:1(4E)) + H2O = a neolactoside IV(2)-alpha-Fuc-nLc4Cer(d18:1(4E)) + N-acetyl-alpha-D-galactosamine. It catalyses the reaction a neolactoside IV(3)-alpha-GalNAc,IV(2)-alpha-Fuc-nLc4Cer(d18:0) + H2O = a neolactoside IV(2)-alpha-Fuc-nLc4Cer(d18:0) + N-acetyl-alpha-D-galactosamine. It carries out the reaction a globoside IV3GalNAc-Gb4Cer + H2O = N-acetyl-alpha-D-galactosamine + a globoside Gb4Cer. Removes terminal alpha-N-acetylgalactosamine residues from glycolipids and glycopeptides. Required for the breakdown of glycolipids. In Rattus norvegicus (Rat), this protein is Alpha-N-acetylgalactosaminidase (Naga).